A 315-amino-acid chain; its full sequence is Cytochrome c biogenesis protein CcsA (315 aa).

7 helical membrane-spanning segments follow: residues 17–37 (LGFAAFLFLLMALPISFWAVA), 72–92 (ISNLYESLCFLTWGCTLAQLF), 101–121 (IVSAVATPVSLLSIGFASFVL), 146–166 (VIMCSYAALLIGSILSFGVFL), 221–241 (SITAGFLLLTVGLISGAVWAN), 255–272 (TWALICWLVYAAYLHTRI), and 282–302 (AILAIAGFFVIIVCYIGVNLL).

This sequence belongs to the CcmF/CycK/Ccl1/NrfE/CcsA family. In terms of assembly, may interact with ccs1.

The protein localises to the cellular thylakoid membrane. In terms of biological role, required during biogenesis of c-type cytochromes (cytochrome c6 and cytochrome f) at the step of heme attachment. The sequence is that of Cytochrome c biogenesis protein CcsA from Prochlorococcus marinus (strain NATL2A).